A 128-amino-acid chain; its full sequence is Calcitonin gene-related peptide 1 (128 aa).

Residues 1 to 25 form the signal peptide; it reads MGLWKSSPFLAFSILVLCQAGGLQA. The propeptide occupies 26 to 80; it reads APFRSALEGLPDPTALSEKEGRLLLAALVKAYVQRKNELEQEQEQETEGSSITAQ. Residues 63–83 form a disordered region; it reads ELEQEQEQETEGSSITAQKRS. The segment covering 74 to 83 has biased composition (polar residues); that stretch reads GSSITAQKRS. The cysteines at positions 84 and 89 are disulfide-linked. F119 is subject to Phenylalanine amide. Residues 125–128 constitute a propeptide that is removed on maturation; it reads DLRA.

It belongs to the calcitonin family.

The protein resides in the secreted. CGRP1/CALCA is a peptide hormone that induces vasodilation mediated by the CALCRL-RAMP1 receptor complex. Dilates a variety of vessels including the coronary, cerebral and systemic vasculature. Its abundance in the CNS also points toward a neurotransmitter or neuromodulator role. It also elevates platelet cAMP. CGRP1 can also bind and activate CALCR-RAMP1 (AMYR1) receptor complex. The chain is Calcitonin gene-related peptide 1 (CALCA) from Canis lupus familiaris (Dog).